The primary structure comprises 24 residues: Brevinin-1R (24 aa).

A disulfide bridge links C18 with C24.

In terms of tissue distribution, expressed by the skin glands.

It localises to the secreted. Antimicrobial peptide. In Pelophylax ridibundus (Marsh frog), this protein is Brevinin-1R.